Reading from the N-terminus, the 720-residue chain is MELGCWTQLGLTFLQLLLISSLPREYTVINEACPGAEWNIMCRECCEYDQIECVCPGKREVVGYTIPCCRNEENECDSCLIHPGCTIFENCKSCRNGSWGGTLDDFYVKGFYCAECRAGWYGGDCMRCGQVLRAPKGQILLESYPLNAHCEWTIHAKPGFVIQLRFVMLSLEFDYMCQYDYVEVRDGDNRDGQIIKRVCGNERPAPIQSIGSSLHVLFHSDGSKNFDGFHAIYEEITACSSSPCFHDGTCVLDKAGSYKCACLAGYTGQRCENLLEERNCSDPGGPVNGYQKITGGPGLINGRHAKIGTVVSFFCNNSYVLSGNEKRTCQQNGEWSGKQPICIKACREPKISDLVRRRVLPMQVQSRETPLHQLYSAAFSKQKLQSAPTKKPALPFGDLPMGYQHLHTQLQYECISPFYRRLGSSRRTCLRTGKWSGRAPSCIPICGKIENITAPKTQGLRWPWQAAIYRRTSGVHDGSLHKGAWFLVCSGALVNERTVVVAAHCVTDLGKVTMIKTADLKVVLGKFYRDDDRDEKTIQSLQISAIILHPNYDPILLDADIAILKLLDKARISTRVQPICLAASRDLSTSFQESHITVAGWNVLADVRSPGFKNDTLRSGVVSVVDSLLCEEQHEDHGIPVSVTDNMFCASWEPTAPSDICTAETGGIAAVSFPGRASPEPRWHLMGLVSWSYDKTCSHRLSTAFTKVLPFKDWIERNMK.

Residues methionine 1–serine 21 form the signal peptide. 9 disulfide bridges follow: cysteine 128–cysteine 150, cysteine 177–cysteine 199, cysteine 239–cysteine 250, cysteine 244–cysteine 260, cysteine 262–cysteine 271, cysteine 280–cysteine 329, cysteine 315–cysteine 342, cysteine 414–cysteine 442, and cysteine 489–cysteine 505. Residues cysteine 128–isoleucine 236 form the CUB domain. Residues glutamate 235–glutamate 272 enclose the EGF-like domain. Sushi domains are found at residues arginine 278 to lysine 344 and alanine 387 to proline 444. Residues isoleucine 445–lysine 720 form the Peptidase S1 domain. An N-linked (GlcNAc...) asparagine glycan is attached at asparagine 614. 2 cysteine pairs are disulfide-bonded: cysteine 630–cysteine 649 and cysteine 661–cysteine 697.

The protein belongs to the peptidase S1 family.

The protein resides in the secreted. Functionally, may play a role in regeneration of skeletal muscle. This is Inactive serine protease PAMR1 (PAMR1) from Homo sapiens (Human).